A 296-amino-acid chain; its full sequence is Phosphatidylserine decarboxylase proenzyme (296 aa).

Catalysis depends on charge relay system; for autoendoproteolytic cleavage activity residues aspartate 100, histidine 157, and serine 263. Residue serine 263 is the Schiff-base intermediate with substrate; via pyruvic acid; for decarboxylase activity of the active site. Residue serine 263 is modified to Pyruvic acid (Ser); by autocatalysis.

Belongs to the phosphatidylserine decarboxylase family. PSD-B subfamily. Prokaryotic type I sub-subfamily. Heterodimer of a large membrane-associated beta subunit and a small pyruvoyl-containing alpha subunit. Requires pyruvate as cofactor. In terms of processing, is synthesized initially as an inactive proenzyme. Formation of the active enzyme involves a self-maturation process in which the active site pyruvoyl group is generated from an internal serine residue via an autocatalytic post-translational modification. Two non-identical subunits are generated from the proenzyme in this reaction, and the pyruvate is formed at the N-terminus of the alpha chain, which is derived from the carboxyl end of the proenzyme. The autoendoproteolytic cleavage occurs by a canonical serine protease mechanism, in which the side chain hydroxyl group of the serine supplies its oxygen atom to form the C-terminus of the beta chain, while the remainder of the serine residue undergoes an oxidative deamination to produce ammonia and the pyruvoyl prosthetic group on the alpha chain. During this reaction, the Ser that is part of the protease active site of the proenzyme becomes the pyruvoyl prosthetic group, which constitutes an essential element of the active site of the mature decarboxylase.

It is found in the cell membrane. The catalysed reaction is a 1,2-diacyl-sn-glycero-3-phospho-L-serine + H(+) = a 1,2-diacyl-sn-glycero-3-phosphoethanolamine + CO2. It functions in the pathway phospholipid metabolism; phosphatidylethanolamine biosynthesis; phosphatidylethanolamine from CDP-diacylglycerol: step 2/2. Its function is as follows. Catalyzes the formation of phosphatidylethanolamine (PtdEtn) from phosphatidylserine (PtdSer). In Actinobacillus pleuropneumoniae serotype 7 (strain AP76), this protein is Phosphatidylserine decarboxylase proenzyme.